The chain runs to 578 residues: Raftlin (578 aa).

Residue G2 is the site of N-myristoyl glycine attachment. C3 is lipidated: S-palmitoyl cysteine. The span at 169–184 (VNSAGSSAPVSTANST) shows a compositional bias: polar residues. Disordered regions lie at residues 169–271 (VNSA…VHEE), 449–525 (FSRE…PGGL), and 551–578 (CTGH…VEEN). 3 positions are modified to phosphoserine: S183, S199, and S220. Residues 185 to 206 (EDARDAKNARGDHASLENEKPG) show a composition bias toward basic and acidic residues. Over residues 457-466 (RQMRKSKGKL) the composition is skewed to basic residues. Residues 467–485 (SARDKQQAEENEKNLEDQS) show a composition bias toward basic and acidic residues. Phosphoserine is present on S505. 2 stretches are compositionally biased toward basic and acidic residues: residues 506–518 (EEMK…DKGE) and 557–578 (PGED…VEEN).

This sequence belongs to the raftlin family. As to quaternary structure, interacts with TLR4; the interaction occurs in response to lipopolysaccharide stimulation. Interacts with CLTC; the interaction occurs in response to pathogens. Interacts with AP2A1 and AP2B1. In terms of tissue distribution, expressed in B-cells (at protein level). Expressed in dendritic cells and macrophages.

It localises to the cell membrane. It is found in the cytoplasm. The protein resides in the membrane raft. The protein localises to the endosome. Its subcellular location is the early endosome. In terms of biological role, involved in protein trafficking via association with clathrin and AP2 complex. Upon bacterial lipopolysaccharide stimulation, mediates internalization of TLR4 to endosomes in dendritic cells and macrophages; and internalization of poly(I:C) to TLR3-positive endosomes in myeloid dendritic cells and epithelial cells; resulting in activation of TICAM1-mediated signaling and subsequent IFNB1 production. Involved in T-cell antigen receptor-mediated signaling by regulating tyrosine kinase LCK localization, T-cell dependent antibody production and cytokine secretion. May regulate B-cell antigen receptor-mediated signaling. May play a pivotal role in the formation and/or maintenance of lipid rafts. This is Raftlin (RFTN1) from Homo sapiens (Human).